We begin with the raw amino-acid sequence, 314 residues long: Ribosomal RNA small subunit methyltransferase H 2 (314 aa).

S-adenosyl-L-methionine-binding positions include 33-35, aspartate 53, tyrosine 80, aspartate 101, and glutamine 108; that span reads AGH. The segment at 293–314 is disordered; it reads KELEENSRSKSAKLRVFEKNDL.

Belongs to the methyltransferase superfamily. RsmH family.

The protein localises to the cytoplasm. It catalyses the reaction cytidine(1402) in 16S rRNA + S-adenosyl-L-methionine = N(4)-methylcytidine(1402) in 16S rRNA + S-adenosyl-L-homocysteine + H(+). Functionally, specifically methylates the N4 position of cytidine in position 1402 (C1402) of 16S rRNA. The sequence is that of Ribosomal RNA small subunit methyltransferase H 2 from Agathobacter rectalis (strain ATCC 33656 / DSM 3377 / JCM 17463 / KCTC 5835 / VPI 0990) (Eubacterium rectale).